The following is a 243-amino-acid chain: Uba3-binding protein but1 (243 aa).

A disordered region spans residues 28-50; it reads KSTKKRRSSTKDEETRGMHPHIK.

As to quaternary structure, homodimer. Interacts with but2 and uba3.

Its subcellular location is the nucleus. In terms of biological role, acts as a negative regulator of the NEDD8 pathway. Has a role in meiosis. In Schizosaccharomyces pombe (strain 972 / ATCC 24843) (Fission yeast), this protein is Uba3-binding protein but1 (but1).